Reading from the N-terminus, the 925-residue chain is Neuronal PAS domain-containing protein 3 (925 aa).

The 54-residue stretch at 58-111 (LRKEKSRDAARSRRGKENFEFYELAKLLPLPAAITSQLDKASIIRLTISYLKMR) folds into the bHLH domain. Positions 60-71 (KEKSRDAARSRR) are DNA-binding. Disordered stretches follow at residues 119 to 138 (PPWN…KGAQ) and 219 to 257 (LPPG…SPSL). Residues 152–222 (EAHLGSHILQ…EQLGMKLPPG (71 aa)) form the PAS 1 domain. Over residues 234–256 (AASSASSSSQSETPEPVETTSPS) the composition is skewed to low complexity. One can recognise a PAS 2 domain in the interval 324 to 394 (PPPTINEVRI…HSHLDLLNKG (71 aa)). Positions 398–441 (TKYYRWMQKNGGYIWIQSSATIAINAKNANEKNIIWVNYLLSNP) constitute a PAC domain. Disordered regions lie at residues 457–555 (PEKA…FGAL), 576–645 (PCES…SSPH), and 664–774 (NESS…GASN). Composition is skewed to basic and acidic residues over residues 484-493 (ENSKSDEKGN) and 529-549 (DSRD…KAAE). The segment covering 601–622 (KHQKRKRRRKRQKGGSASRRRL) has biased composition (basic residues). The segment covering 680–690 (NESPYSMTKPP) has biased composition (polar residues). Gly residues-rich tracts occupy residues 700-710 (GQGGSIGGGGA) and 760-771 (GGGAGSGGGGPG).

Efficient DNA binding requires dimerization with another bHLH protein. Interacts with ARNT; forms a heterodimer that binds core DNA sequence 5'-[AG]CGTG-3' within the hypoxia response element (HRE) of target gene promoters. As to expression, detected exclusively in adult brain in inhibitory interneurons.

The protein resides in the nucleus. Functionally, may play a broad role in neurogenesis. May control regulatory pathways relevant to schizophrenia and to psychotic illness. This chain is Neuronal PAS domain-containing protein 3 (Npas3), found in Mus musculus (Mouse).